Reading from the N-terminus, the 352-residue chain is E3 ubiquitin-protein ligase RNF146 (352 aa).

An RING-type zinc finger spans residues 36 to 74 (CAICLQTCVHPVSLPCKHVFCYLCVKGASWLGKRCALCR). Glycyl lysine isopeptide (Lys-Gly) (interchain with G-Cter in ubiquitin) cross-links involve residues lysine 84 and lysine 94. Residues 91-167 (EELKAASRGN…EHGRRRKIKR (77 aa)) form the WWE domain. Tyrosine 107, arginine 110, and tryptophan 114 together coordinate a glycoprotein. Residue lysine 130 forms a Glycyl lysine isopeptide (Lys-Gly) (interchain with G-Cter in ubiquitin) linkage. A glycoprotein-binding residues include tyrosine 144, glutamine 153, arginine 163, and lysine 175. A Glycyl lysine isopeptide (Lys-Gly) (interchain with G-Cter in ubiquitin) cross-link involves residue lysine 175. Disordered stretches follow at residues 195-242 (SSAD…AGAS), 259-293 (ERSHRGEGEEDHESPSSGRVPDTSTEETESDASSD), and 317-352 (NQTVAERSDRPVAGGGTMSVNVRSRRPDGQCTVTEV). Over residues 197 to 210 (ADGADSGSAHTGAS) the composition is skewed to low complexity. A compositionally biased stretch (polar residues) spans 215 to 233 (VPSSTRPLTSVDGQLTSPV). Residues 282–293 (STEETESDASSD) show a composition bias toward acidic residues. Residues serine 288 and serine 292 each carry the phosphoserine modification.

As to quaternary structure, can form homooligomers. Interacts with PARsylated AXIN1, AXIN2, BLZF1, CASC3, H1-2, IPO7, LIG3, NCL, PARP1, XRCC1, XRCC5 and XRCC6. Interacts with DDB1, DHX15, IQGAP1, LRPPRC, PARP2, PRKDC, RUVBL2, TNKS1 and TNKS2. Binding often leads to interactor ubiquitination, in the presence of the appropriate E1 and E2 enzymes, and proteasomal degradation. In terms of processing, ubiquitinated; autoubiquitinated. Autoubiquitination is enhanced upon poly(ADP-ribose)-binding.

The protein resides in the cytoplasm. Its subcellular location is the cytosol. It is found in the nucleus. The enzyme catalyses S-ubiquitinyl-[E2 ubiquitin-conjugating enzyme]-L-cysteine + [acceptor protein]-L-lysine = [E2 ubiquitin-conjugating enzyme]-L-cysteine + N(6)-ubiquitinyl-[acceptor protein]-L-lysine.. The protein operates within protein modification; protein ubiquitination. Its function is as follows. E3 ubiquitin-protein ligase that specifically binds poly-ADP-ribosylated (PARsylated) proteins and mediates their ubiquitination and subsequent degradation. May regulate many important biological processes, such as cell survival and DNA damage response. Acts as an activator of the Wnt signaling pathway by mediating the ubiquitination of PARsylated AXIN1 and AXIN2, 2 key components of the beta-catenin destruction complex. Acts in cooperation with tankyrase proteins (TNKS and TNKS2), which mediate PARsylation of target proteins AXIN1, AXIN2, BLZF1, CASC3, TNKS and TNKS2. Recognizes and binds tankyrase-dependent PARsylated proteins via its WWE domain and mediates their ubiquitination, leading to their degradation. Different ubiquitin linkage types have been observed: TNKS2 undergoes ubiquitination at 'Lys-48' and 'Lys-63', while AXIN1 is only ubiquitinated at 'Lys-48'. May regulate TNKS and TNKS2 subcellular location, preventing aggregation at a centrosomal location. Neuroprotective protein. Protects the brain against N-methyl-D-aspartate (NMDA) receptor-mediated glutamate excitotoxicity and ischemia, by interfering with PAR-induced cell death, called parthanatos. Prevents nuclear translocation of AIFM1 in a PAR-binding dependent manner. Does not affect PARP1 activation. Protects against cell death induced by DNA damaging agents, such as N-methyl-N-nitro-N-nitrosoguanidine (MNNG) and rescues cells from G1 arrest. Promotes cell survival after gamma-irradiation. Facilitates DNA repair. The chain is E3 ubiquitin-protein ligase RNF146 (Rnf146) from Rattus norvegicus (Rat).